A 363-amino-acid chain; its full sequence is UDP-N-acetylenolpyruvoylglucosamine reductase (363 aa).

Residues 25–201 (IGPVARRMLT…RSAPVRYREL (177 aa)) enclose the FAD-binding PCMH-type domain. The active site involves arginine 168. Serine 249 acts as the Proton donor in catalysis. Residue glutamate 352 is part of the active site.

It belongs to the MurB family. The cofactor is FAD.

It localises to the cytoplasm. It catalyses the reaction UDP-N-acetyl-alpha-D-muramate + NADP(+) = UDP-N-acetyl-3-O-(1-carboxyvinyl)-alpha-D-glucosamine + NADPH + H(+). Its pathway is cell wall biogenesis; peptidoglycan biosynthesis. Its function is as follows. Cell wall formation. This is UDP-N-acetylenolpyruvoylglucosamine reductase from Mycolicibacterium smegmatis (strain ATCC 700084 / mc(2)155) (Mycobacterium smegmatis).